The sequence spans 207 residues: ATP-dependent Clp protease proteolytic subunit (207 aa).

The active-site Nucleophile is the Ser-111. Residue His-136 is part of the active site.

This sequence belongs to the peptidase S14 family. In terms of assembly, fourteen ClpP subunits assemble into 2 heptameric rings which stack back to back to give a disk-like structure with a central cavity, resembling the structure of eukaryotic proteasomes.

It is found in the cytoplasm. It carries out the reaction Hydrolysis of proteins to small peptides in the presence of ATP and magnesium. alpha-casein is the usual test substrate. In the absence of ATP, only oligopeptides shorter than five residues are hydrolyzed (such as succinyl-Leu-Tyr-|-NHMec, and Leu-Tyr-Leu-|-Tyr-Trp, in which cleavage of the -Tyr-|-Leu- and -Tyr-|-Trp bonds also occurs).. Cleaves peptides in various proteins in a process that requires ATP hydrolysis. Has a chymotrypsin-like activity. Plays a major role in the degradation of misfolded proteins. This chain is ATP-dependent Clp protease proteolytic subunit, found in Yersinia enterocolitica serotype O:8 / biotype 1B (strain NCTC 13174 / 8081).